The chain runs to 309 residues: Glutamyl-Q tRNA(Asp) synthetase (309 aa).

L-glutamate is bound by residues 8-12 (RFSPS) and E44. The 'HIGH' region signature appears at 11–21 (PSPTGPLHAGS). Positions 100, 102, 126, and 130 each coordinate Zn(2+). L-glutamate-binding residues include Y205 and R223. A 'KMSKS' region motif is present at residues 261 to 265 (KLSKQ). K264 is an ATP binding site.

This sequence belongs to the class-I aminoacyl-tRNA synthetase family. GluQ subfamily. Zn(2+) serves as cofactor.

In terms of biological role, catalyzes the tRNA-independent activation of glutamate in presence of ATP and the subsequent transfer of glutamate onto a tRNA(Asp). Glutamate is transferred on the 2-amino-5-(4,5-dihydroxy-2-cyclopenten-1-yl) moiety of the queuosine in the wobble position of the QUC anticodon. This is Glutamyl-Q tRNA(Asp) synthetase from Albidiferax ferrireducens (strain ATCC BAA-621 / DSM 15236 / T118) (Rhodoferax ferrireducens).